A 112-amino-acid polypeptide reads, in one-letter code: Colipase (112 aa).

The first 17 residues, 1 to 17 (MKVLVVLLVTLVAVAYA), serve as a signal peptide directing secretion. A propeptide spans 18–22 (APGPR) (enterostatin, activation peptide). 5 disulfides stabilise this stretch: Cys-34–Cys-45, Cys-40–Cys-56, Cys-44–Cys-78, Cys-66–Cys-86, and Cys-80–Cys-104.

The protein belongs to the colipase family. Forms a 1:1 stoichiometric complex with pancreatic lipase. Expressed by the pancreas.

It is found in the secreted. Its function is as follows. Colipase is a cofactor of pancreatic lipase. It allows the lipase to anchor itself to the lipid-water interface. Without colipase the enzyme is washed off by bile salts, which have an inhibitory effect on the lipase. Enterostatin has a biological activity as a satiety signal. This Rattus norvegicus (Rat) protein is Colipase.